The chain runs to 717 residues: Glutamine--fructose-6-phosphate aminotransferase [isomerizing] (717 aa).

The active-site For GATase activity is C2. One can recognise a Glutamine amidotransferase type-2 domain in the interval 2-318 (CGIFGYCNYL…DDDLAHIYDG (317 aa)). S253 carries the post-translational modification Phosphoserine. T334 is subject to Phosphothreonine. At S336 the chain carries Phosphoserine. 2 SIS domains span residues 390-529 (WLPV…DRVS) and 562-707 (CATE…VDFP).

It carries out the reaction D-fructose 6-phosphate + L-glutamine = D-glucosamine 6-phosphate + L-glutamate. Its pathway is nucleotide-sugar biosynthesis; UDP-N-acetyl-alpha-D-glucosamine biosynthesis; alpha-D-glucosamine 6-phosphate from D-fructose 6-phosphate: step 1/1. In terms of biological role, involved in amino sugar synthesis (formation of chitin, supplies the amino sugars of asparagine-linked oligosaccharides of glycoproteins). The sequence is that of Glutamine--fructose-6-phosphate aminotransferase [isomerizing] (GFA1) from Saccharomyces cerevisiae (strain ATCC 204508 / S288c) (Baker's yeast).